We begin with the raw amino-acid sequence, 607 residues long: Chaperone protein DnaK (607 aa).

Residue T173 is modified to Phosphothreonine; by autocatalysis. The span at 577–588 (AQAQQGAEGAAS) shows a compositional bias: low complexity. The segment at 577–607 (AQAQQGAEGAASQDDDVVDADFTEVKDDDNK) is disordered. Residues 589 to 598 (QDDDVVDADF) are compositionally biased toward acidic residues.

This sequence belongs to the heat shock protein 70 family.

Acts as a chaperone. The sequence is that of Chaperone protein DnaK from Macrococcus caseolyticus (strain JCSC5402) (Macrococcoides caseolyticum).